A 443-amino-acid chain; its full sequence is Thymidine phosphorylase (443 aa).

The protein belongs to the thymidine/pyrimidine-nucleoside phosphorylase family. In terms of assembly, homodimer.

The enzyme catalyses thymidine + phosphate = 2-deoxy-alpha-D-ribose 1-phosphate + thymine. Its pathway is pyrimidine metabolism; dTMP biosynthesis via salvage pathway; dTMP from thymine: step 1/2. Functionally, the enzymes which catalyze the reversible phosphorolysis of pyrimidine nucleosides are involved in the degradation of these compounds and in their utilization as carbon and energy sources, or in the rescue of pyrimidine bases for nucleotide synthesis. In Shewanella frigidimarina (strain NCIMB 400), this protein is Thymidine phosphorylase.